The chain runs to 449 residues: UNC93-like protein MFSD11 (449 aa).

The helical transmembrane segment at 8-28 (LFNIIILGVAFMFMFTAFQTC) threads the bilayer. A glycan (N-linked (GlcNAc...) asparagine) is linked at Asn40. 5 helical membrane-spanning segments follow: residues 53–73 (AIIY…VAIV), 74–94 (GPQL…AVFN), 96–116 (PFPW…AVLW), 138–158 (IFWA…YFAW), and 170–190 (RTVF…FFLI). Ser204 carries the post-translational modification Phosphoserine. The next 6 membrane-spanning stretches (helical) occupy residues 239–259 (MLLL…FSGV), 277–297 (LIGL…SLFG), 309–329 (PVVL…FLNM), 359–379 (FLLG…LGFL), 385–405 (APAF…AFFY), and 410–430 (LLHW…LSFF).

This sequence belongs to the unc-93 family.

The protein localises to the membrane. In Pongo abelii (Sumatran orangutan), this protein is UNC93-like protein MFSD11 (MFSD11).